The primary structure comprises 969 residues: UvrABC system protein A (969 aa).

ATP is bound at residue 32–39; the sequence is GLSGSGKS. The C4-type zinc-finger motif lies at 258-286; the sequence is CPNGHPLAVDDLEPRSFSFNSPYGACPEC. ABC transporter domains lie at 316-599 and 619-948; these read WSAG…KDSI and VDRK…KFLA. ATP is bound at residue 652-659; that stretch reads GVSGSGKS. A C4-type zinc finger spans residues 751 to 777; the sequence is CEACTGDGTIKIEMNFLPDVYVPCEVC.

The protein belongs to the ABC transporter superfamily. UvrA family. Forms a heterotetramer with UvrB during the search for lesions.

The protein localises to the cytoplasm. The UvrABC repair system catalyzes the recognition and processing of DNA lesions. UvrA is an ATPase and a DNA-binding protein. A damage recognition complex composed of 2 UvrA and 2 UvrB subunits scans DNA for abnormalities. When the presence of a lesion has been verified by UvrB, the UvrA molecules dissociate. This chain is UvrABC system protein A, found in Mycobacterium leprae (strain TN).